The chain runs to 390 residues: Methionyl-tRNA formyltransferase, mitochondrial (390 aa).

The N-terminal 33 residues, 1 to 33 (MRVLLRCCCGHLPVGGGAGRRSNPRWRALARLS), are a transit peptide targeting the mitochondrion.

The protein belongs to the Fmt family.

The protein localises to the mitochondrion. It catalyses the reaction L-methionyl-tRNA(fMet) + (6R)-10-formyltetrahydrofolate = N-formyl-L-methionyl-tRNA(fMet) + (6S)-5,6,7,8-tetrahydrofolate + H(+). In terms of biological role, methionyl-tRNA formyltransferase that formylates methionyl-tRNA in mitochondria and is crucial for translation initiation. The protein is Methionyl-tRNA formyltransferase, mitochondrial (MTFMT) of Bos taurus (Bovine).